A 615-amino-acid polypeptide reads, in one-letter code: RNA polymerase sigma factor RpoD (615 aa).

Positions 177 to 215 (APTATHVGSELSQEDLDDDEDEDEEDGDDDAADDDNSID) are disordered. The span at 188–214 (SQEDLDDDEDEDEEDGDDDAADDDNSI) shows a compositional bias: acidic residues. The tract at residues 381–451 (MVEANLRLVI…TRSIADQART (71 aa)) is sigma-70 factor domain-2. The short motif at 405–408 (DLIQ) is the Interaction with polymerase core subunit RpoC element. A sigma-70 factor domain-3 region spans residues 460–536 (ETINKLNRIS…DTTLELPLDS (77 aa)). The segment at 549–602 (VLAGLTAREAKVLRMRFGIDMNTDHTLEEVGKQFDVTRERIRQIEAKALRKLRH) is sigma-70 factor domain-4. The segment at residues 575–594 (LEEVGKQFDVTRERIRQIEA) is a DNA-binding region (H-T-H motif).

The protein belongs to the sigma-70 factor family. RpoD/SigA subfamily. Interacts transiently with the RNA polymerase catalytic core.

It is found in the cytoplasm. In terms of biological role, sigma factors are initiation factors that promote the attachment of RNA polymerase to specific initiation sites and are then released. This sigma factor is the primary sigma factor during exponential growth. This Salmonella typhi protein is RNA polymerase sigma factor RpoD.